The primary structure comprises 322 residues: Protein-methionine-sulfoxide reductase catalytic subunit MsrP (322 aa).

Positions 1 to 59 form a signal peptide, tat-type signal; the sequence is MSLRDALKTPSSEITDEAVYRDRRRLLQLFALTPALSVAGCAEADPPPPPKTVVTPAQA. Residues asparagine 79, 82-83, cysteine 137, threonine 172, asparagine 220, arginine 225, and 236-238 contribute to the Mo-molybdopterin site; these read YE and SIK.

Belongs to the MsrP family. In terms of assembly, heterodimer of a catalytic subunit (MsrP) and a heme-binding subunit (MsrQ). It depends on Mo-molybdopterin as a cofactor. Post-translationally, predicted to be exported by the Tat system. The position of the signal peptide cleavage has not been experimentally proven.

Its subcellular location is the periplasm. It carries out the reaction L-methionyl-[protein] + a quinone + H2O = L-methionyl-(S)-S-oxide-[protein] + a quinol. The enzyme catalyses L-methionyl-[protein] + a quinone + H2O = L-methionyl-(R)-S-oxide-[protein] + a quinol. Functionally, part of the MsrPQ system that repairs oxidized periplasmic proteins containing methionine sulfoxide residues (Met-O), using respiratory chain electrons. Thus protects these proteins from oxidative-stress damage caused by reactive species of oxygen and chlorine generated by the host defense mechanisms. MsrPQ is essential for the maintenance of envelope integrity under bleach stress, rescuing a wide series of structurally unrelated periplasmic proteins from methionine oxidation. The catalytic subunit MsrP is non-stereospecific, being able to reduce both (R-) and (S-) diastereoisomers of methionine sulfoxide. This chain is Protein-methionine-sulfoxide reductase catalytic subunit MsrP, found in Xanthomonas campestris pv. campestris (strain ATCC 33913 / DSM 3586 / NCPPB 528 / LMG 568 / P 25).